We begin with the raw amino-acid sequence, 122 residues long: MLPGTFFEVLKNEGVVAIATQGEDGPHLVNTWNSYLKVLDGNRIVVPVGGMHKTEANVARDERVLMTLGSRKVAGRNGPGTGFLIRGSAAFRTDGPEFEAIARFKWARAALVITVVSAEQTL.

Monomer and homodimer. FMN is required as a cofactor.

The protein resides in the cytoplasm. Its function is as follows. Functions as a redox protein with a potential of -325 mV. In Nitratidesulfovibrio vulgaris (strain DSM 19637 / Miyazaki F) (Desulfovibrio vulgaris), this protein is FMN-binding protein.